The chain runs to 214 residues: Large ribosomal subunit protein uL3 (214 aa).

Residues 119–159 (GVKRHGFAGGPKTHGQSDRHRAPGSIGPTTDPGRVHKGKRM) are disordered.

This sequence belongs to the universal ribosomal protein uL3 family. In terms of assembly, part of the 50S ribosomal subunit. Forms a cluster with proteins L14 and L19.

Functionally, one of the primary rRNA binding proteins, it binds directly near the 3'-end of the 23S rRNA, where it nucleates assembly of the 50S subunit. This Thermomicrobium roseum (strain ATCC 27502 / DSM 5159 / P-2) protein is Large ribosomal subunit protein uL3.